The chain runs to 150 residues: Peptide deformylase 1 (150 aa).

Fe cation contacts are provided by C88 and H130. E131 is an active-site residue. H134 serves as a coordination point for Fe cation.

Belongs to the polypeptide deformylase family. Fe(2+) serves as cofactor.

The catalysed reaction is N-terminal N-formyl-L-methionyl-[peptide] + H2O = N-terminal L-methionyl-[peptide] + formate. In terms of biological role, removes the formyl group from the N-terminal Met of newly synthesized proteins. Requires at least a dipeptide for an efficient rate of reaction. N-terminal L-methionine is a prerequisite for activity but the enzyme has broad specificity at other positions. The sequence is that of Peptide deformylase 1 from Clostridium acetobutylicum (strain ATCC 824 / DSM 792 / JCM 1419 / IAM 19013 / LMG 5710 / NBRC 13948 / NRRL B-527 / VKM B-1787 / 2291 / W).